A 366-amino-acid polypeptide reads, in one-letter code: MRKRISAIIMTLFMVLASCSNQLEAEKLAAESKNTFFDSLVKIGQGFQDIFGILEMQLGDALGFNAVKSGDKKSKVGEHFKKIGDGLTTTKDKLKELSNKISEAKNANSSTIEAVKSAINSASDVFEQLITALTKLADTAKEAGDTNIGDNADAVPGAAEKTGVEAIIAGVKDIIGAAEKSGVKIEYGNAGDPIATAANTTDALAVLGGNTAKATQGAGDKLAFEVSKADPWAIIDKIKNAKAADGIQLDAGEKDAGTLAASNNNASANAGAESNAASSSSWLFLMQLSKGGKFSAAVADAGAVKAAAVSAVNKVLGVLDFIIRKTVSSNLDKIREAVKGIKYSEITETDATESGDAQPITNKSSN.

The N-terminal stretch at 1 to 18 (MRKRISAIIMTLFMVLAS) is a signal peptide. The N-palmitoyl cysteine moiety is linked to residue C19. A lipid anchor (S-diacylglycerol cysteine) is attached at C19.

Belongs to the variable large protein (Vlp) family. Beta subfamily.

It localises to the cell outer membrane. Its function is as follows. The Vlp and Vsp proteins are antigenically distinct proteins, only one vlp or vsp gene is transcriptionally active at any one time. Switching between these genes is a mechanism of host immune response evasion. In Borrelia hermsii, this protein is Variable large protein 10.